The primary structure comprises 328 residues: L-lactate dehydrogenase (328 aa).

NAD(+) contacts are provided by residues Val18, Glu39, Lys46, Tyr71, and 85–86 (GA). The substrate site is built by Gln88 and Arg94. NAD(+)-binding positions include Ser107, 124–126 (AAN), and Ser149. 126–129 (NPVD) lines the substrate pocket. 154–157 (DSAR) is a substrate binding site. Beta-D-fructose 1,6-bisphosphate-binding residues include Arg159 and His174. His181 serves as the catalytic Proton acceptor. Tyr226 carries the post-translational modification Phosphotyrosine. Thr235 contributes to the substrate binding site.

Belongs to the LDH/MDH superfamily. LDH family. As to quaternary structure, homotetramer.

The protein resides in the cytoplasm. The catalysed reaction is (S)-lactate + NAD(+) = pyruvate + NADH + H(+). Its pathway is fermentation; pyruvate fermentation to lactate; (S)-lactate from pyruvate: step 1/1. Its activity is regulated as follows. Allosterically activated by fructose 1,6-bisphosphate (FBP). In terms of biological role, catalyzes the conversion of lactate to pyruvate. The sequence is that of L-lactate dehydrogenase from Streptococcus pneumoniae (strain 70585).